The chain runs to 371 residues: F-box protein At2g41170 (371 aa).

The F-box domain occupies 56-102; the sequence is KMSLLDLPDLTLDCILEKLSPSELCAMTSVCSELRDKCVSDHLWEKH.

The sequence is that of F-box protein At2g41170 from Arabidopsis thaliana (Mouse-ear cress).